Here is a 123-residue protein sequence, read N- to C-terminus: Small ribosomal subunit protein uS12 (123 aa).

Residues 1–28 (MPTIQQLIRKPRQPKVKRSKSQHLESCP) form a disordered region. Residues 9 to 21 (RKPRQPKVKRSKS) show a composition bias toward basic residues. Aspartate 89 bears the 3-methylthioaspartic acid mark.

Belongs to the universal ribosomal protein uS12 family. As to quaternary structure, part of the 30S ribosomal subunit. Contacts proteins S8 and S17. May interact with IF1 in the 30S initiation complex.

In terms of biological role, with S4 and S5 plays an important role in translational accuracy. Functionally, interacts with and stabilizes bases of the 16S rRNA that are involved in tRNA selection in the A site and with the mRNA backbone. Located at the interface of the 30S and 50S subunits, it traverses the body of the 30S subunit contacting proteins on the other side and probably holding the rRNA structure together. The combined cluster of proteins S8, S12 and S17 appears to hold together the shoulder and platform of the 30S subunit. This Dinoroseobacter shibae (strain DSM 16493 / NCIMB 14021 / DFL 12) protein is Small ribosomal subunit protein uS12.